Reading from the N-terminus, the 333-residue chain is MSNDTQPTIAIIGYGSQGRAHALNLRDSGFDVTVGLRPGGPTEAKAQADGFTVVAPAEAVKTADLVAVLTPDMVQKKLYEEVIAPNMKQGACLLFAHGLNVHFDMIKPRADLDVVLVAPKGPGALVRREYEIGRGVPCIYAVYQDTSGKAEQFALTYAGGLGGARANIIKTTFKEETETDLFGEQAVLCGGASSLVQAGFEVLVEAGYQPEIAYYEVLHELKLIVDLFYEGGITRMLEFVSETAQYGDYVSGPRVIDASTKARMKDVLTDIQNGTFTKNWVAEYEAGLPNYTKFKQADLEHPIEEVGKKLRAKMVWLNGEQQAAATPAKQQAA.

Residues 1–171 (MSNDTQPTIA…GGARANIIKT (171 aa)) enclose the KARI N-terminal Rossmann domain. Residues 14–17 (YGSQ), arginine 37, threonine 42, and 72–75 (DMVQ) contribute to the NADP(+) site. The active site involves histidine 97. Residue glycine 123 participates in NADP(+) binding. In terms of domain architecture, KARI C-terminal knotted spans 172 to 317 (TFKEETETDL…KKLRAKMVWL (146 aa)). Aspartate 180, glutamate 184, glutamate 216, and glutamate 220 together coordinate Mg(2+). Serine 241 contacts substrate.

It belongs to the ketol-acid reductoisomerase family. Requires Mg(2+) as cofactor.

The catalysed reaction is (2R)-2,3-dihydroxy-3-methylbutanoate + NADP(+) = (2S)-2-acetolactate + NADPH + H(+). It carries out the reaction (2R,3R)-2,3-dihydroxy-3-methylpentanoate + NADP(+) = (S)-2-ethyl-2-hydroxy-3-oxobutanoate + NADPH + H(+). The protein operates within amino-acid biosynthesis; L-isoleucine biosynthesis; L-isoleucine from 2-oxobutanoate: step 2/4. It participates in amino-acid biosynthesis; L-valine biosynthesis; L-valine from pyruvate: step 2/4. Functionally, involved in the biosynthesis of branched-chain amino acids (BCAA). Catalyzes an alkyl-migration followed by a ketol-acid reduction of (S)-2-acetolactate (S2AL) to yield (R)-2,3-dihydroxy-isovalerate. In the isomerase reaction, S2AL is rearranged via a Mg-dependent methyl migration to produce 3-hydroxy-3-methyl-2-ketobutyrate (HMKB). In the reductase reaction, this 2-ketoacid undergoes a metal-dependent reduction by NADPH to yield (R)-2,3-dihydroxy-isovalerate. This chain is Ketol-acid reductoisomerase (NADP(+)), found in Xanthomonas campestris pv. campestris (strain 8004).